Reading from the N-terminus, the 282-residue chain is MEMO1 family protein Msed_2139 (282 aa).

This sequence belongs to the MEMO1 family.

In Metallosphaera sedula (strain ATCC 51363 / DSM 5348 / JCM 9185 / NBRC 15509 / TH2), this protein is MEMO1 family protein Msed_2139.